Reading from the N-terminus, the 261-residue chain is Small ribosomal subunit protein uS2 (261 aa).

Ser2 carries the N-acetylserine modification. Residues 211 to 261 (EQNAAEDSKAEDAEEAPVADAEPDWSGETEDVDWAESGATPAAEEAAASNW) form a disordered region. A compositionally biased stretch (acidic residues) spans 222–244 (DAEEAPVADAEPDWSGETEDVDW). The segment covering 245-261 (AESGATPAAEEAAASNW) has biased composition (low complexity).

This sequence belongs to the universal ribosomal protein uS2 family. Component of the small ribosomal subunit. Mature ribosomes consist of a small (40S) and a large (60S) subunit. The 40S subunit contains about 33 different proteins and 1 molecule of RNA (18S). The 60S subunit contains about 49 different proteins and 3 molecules of RNA (25S, 5.8S and 5S). Interacts with RPS21.

The protein resides in the cytoplasm. Its function is as follows. Required for the assembly and/or stability of the 40S ribosomal subunit. Required for the processing of the 20S rRNA-precursor to mature 18S rRNA in a late step of the maturation of 40S ribosomal subunits. The chain is Small ribosomal subunit protein uS2 from Meyerozyma guilliermondii (strain ATCC 6260 / CBS 566 / DSM 6381 / JCM 1539 / NBRC 10279 / NRRL Y-324) (Yeast).